A 180-amino-acid polypeptide reads, in one-letter code: Transcription repressor NadR (180 aa).

In terms of assembly, homodimer.

Its function is as follows. In the presence of nicotinic acid represses transcription of the nadBCA and nifS-nadR operons. Also binds to DNA upstream of the niaP gene, probably regulating it as well. May bind nicotinic acid. The chain is Transcription repressor NadR (nadR) from Bacillus subtilis (strain 168).